Here is a 100-residue protein sequence, read N- to C-terminus: Urease subunit gamma (100 aa).

It belongs to the urease gamma subunit family. As to quaternary structure, heterotrimer of UreA (gamma), UreB (beta) and UreC (alpha) subunits. Three heterotrimers associate to form the active enzyme. Although not discussed in the published references, Met-1 is represented in the submitted PDB entries as being modified by either a formyl, a carboxyl, or an acetyl group. The N-terminal is probably N-(dihydroxymethyl)methionine, the hydrated form of N-formylmethionine.

Its subcellular location is the cytoplasm. The enzyme catalyses urea + 2 H2O + H(+) = hydrogencarbonate + 2 NH4(+). It participates in nitrogen metabolism; urea degradation; CO(2) and NH(3) from urea (urease route): step 1/1. The polypeptide is Urease subunit gamma (Sporosarcina pasteurii (Bacillus pasteurii)).